Here is a 231-residue protein sequence, read N- to C-terminus: Endo-1,4-beta-xylanase 4 (231 aa).

The signal sequence occupies residues 1–18 (MVSFTTILVAATAALVAA). A GH11 domain is found at 42–230 (GGTPSSTGTH…SSGSSTVTIQ (189 aa)). N99 carries an N-linked (GlcNAc...) asparagine glycan. E126 acts as the Nucleophile in catalysis. E217 functions as the Proton donor in the catalytic mechanism.

The protein belongs to the glycosyl hydrolase 11 (cellulase G) family.

It is found in the secreted. It carries out the reaction Endohydrolysis of (1-&gt;4)-beta-D-xylosidic linkages in xylans.. Its pathway is glycan degradation; xylan degradation. Its function is as follows. Endo-1,4-beta-xylanase involved in the hydrolysis of xylan, a major structural heterogeneous polysaccharide found in plant biomass representing the second most abundant polysaccharide in the biosphere, after cellulose. In Pyricularia grisea (Crabgrass-specific blast fungus), this protein is Endo-1,4-beta-xylanase 4 (XYL4).